Reading from the N-terminus, the 51-residue chain is UPF0391 membrane protein Psyc_0130 (51 aa).

2 helical membrane passes run 6 to 26 (IIFA…VAGL) and 28 to 47 (ANFA…VAFV).

This sequence belongs to the UPF0391 family.

It localises to the cell membrane. The protein is UPF0391 membrane protein Psyc_0130 of Psychrobacter arcticus (strain DSM 17307 / VKM B-2377 / 273-4).